Consider the following 526-residue polypeptide: UDP-N-acetylmuramoyl-L-alanyl-D-glutamate--2,6-diaminopimelate ligase (526 aa).

The UDP-N-acetyl-alpha-D-muramoyl-L-alanyl-D-glutamate site is built by Leu48 and Ser50. 136–142 (GTSGKTT) serves as a coordination point for ATP. Residues 178–179 (TT), Ser205, and Arg213 each bind UDP-N-acetyl-alpha-D-muramoyl-L-alanyl-D-glutamate. Lys245 bears the N6-carboxylysine mark. Meso-2,6-diaminopimelate is bound by residues Arg408, 432–435 (DNPR), Gly490, and Glu494. The Meso-diaminopimelate recognition motif signature appears at 432-435 (DNPR).

This sequence belongs to the MurCDEF family. MurE subfamily. Requires Mg(2+) as cofactor. In terms of processing, carboxylation is probably crucial for Mg(2+) binding and, consequently, for the gamma-phosphate positioning of ATP.

The protein resides in the cytoplasm. The catalysed reaction is UDP-N-acetyl-alpha-D-muramoyl-L-alanyl-D-glutamate + meso-2,6-diaminopimelate + ATP = UDP-N-acetyl-alpha-D-muramoyl-L-alanyl-gamma-D-glutamyl-meso-2,6-diaminopimelate + ADP + phosphate + H(+). It functions in the pathway cell wall biogenesis; peptidoglycan biosynthesis. Its function is as follows. Catalyzes the addition of meso-diaminopimelic acid to the nucleotide precursor UDP-N-acetylmuramoyl-L-alanyl-D-glutamate (UMAG) in the biosynthesis of bacterial cell-wall peptidoglycan. In Corynebacterium efficiens (strain DSM 44549 / YS-314 / AJ 12310 / JCM 11189 / NBRC 100395), this protein is UDP-N-acetylmuramoyl-L-alanyl-D-glutamate--2,6-diaminopimelate ligase.